We begin with the raw amino-acid sequence, 259 residues long: Global transcriptional regulator CodY (259 aa).

The segment at 1-155 is GAF domain; the sequence is MALLQKTRKI…GATVVGMEIL (155 aa). The segment at residues 203-222 is a DNA-binding region (H-T-H motif); that stretch reads ASKIADRVGITRSVIVNALR. Position 215 is a phosphoserine (Ser-215).

It belongs to the CodY family.

The protein resides in the cytoplasm. Functionally, DNA-binding global transcriptional regulator which is involved in the adaptive response to starvation and acts by directly or indirectly controlling the expression of numerous genes in response to nutrient availability. During rapid exponential growth, CodY is highly active and represses genes whose products allow adaptation to nutrient depletion. In Bacillus licheniformis (strain ATCC 14580 / DSM 13 / JCM 2505 / CCUG 7422 / NBRC 12200 / NCIMB 9375 / NCTC 10341 / NRRL NRS-1264 / Gibson 46), this protein is Global transcriptional regulator CodY.